Consider the following 262-residue polypeptide: Indole-3-glycerol phosphate synthase (262 aa).

Belongs to the TrpC family.

The catalysed reaction is 1-(2-carboxyphenylamino)-1-deoxy-D-ribulose 5-phosphate + H(+) = (1S,2R)-1-C-(indol-3-yl)glycerol 3-phosphate + CO2 + H2O. It functions in the pathway amino-acid biosynthesis; L-tryptophan biosynthesis; L-tryptophan from chorismate: step 4/5. The protein is Indole-3-glycerol phosphate synthase of Aromatoleum aromaticum (strain DSM 19018 / LMG 30748 / EbN1) (Azoarcus sp. (strain EbN1)).